The sequence spans 639 residues: Tetracycline resistance protein TetW (639 aa).

Residues 1-243 (MKIINIGILA…VTGLFQPIGE (243 aa)) form the tr-type G domain. GTP contacts are provided by residues 10-17 (AHVDAGKT), 74-78 (DTPGH), and 128-131 (NKID).

This sequence belongs to the TRAFAC class translation factor GTPase superfamily. Classic translation factor GTPase family. TetM/TetO subfamily.

Functionally, abolishes the inhibitory effect of tetracyclin on protein synthesis by a non-covalent modification of the ribosomes. This chain is Tetracycline resistance protein TetW (tetW), found in Butyrivibrio fibrisolvens.